Reading from the N-terminus, the 420-residue chain is Serine hydroxymethyltransferase (420 aa).

Residues L121 and 125–127 (GHL) each bind (6S)-5,6,7,8-tetrahydrofolate. K230 carries the N6-(pyridoxal phosphate)lysine modification. Position 354–356 (354–356 (SPF)) interacts with (6S)-5,6,7,8-tetrahydrofolate.

It belongs to the SHMT family. Homodimer. It depends on pyridoxal 5'-phosphate as a cofactor.

It localises to the cytoplasm. It carries out the reaction (6R)-5,10-methylene-5,6,7,8-tetrahydrofolate + glycine + H2O = (6S)-5,6,7,8-tetrahydrofolate + L-serine. It participates in one-carbon metabolism; tetrahydrofolate interconversion. The protein operates within amino-acid biosynthesis; glycine biosynthesis; glycine from L-serine: step 1/1. Catalyzes the reversible interconversion of serine and glycine with tetrahydrofolate (THF) serving as the one-carbon carrier. This reaction serves as the major source of one-carbon groups required for the biosynthesis of purines, thymidylate, methionine, and other important biomolecules. Also exhibits THF-independent aldolase activity toward beta-hydroxyamino acids, producing glycine and aldehydes, via a retro-aldol mechanism. This chain is Serine hydroxymethyltransferase, found in Rickettsia africae (strain ESF-5).